Consider the following 494-residue polypeptide: Amidophosphoribosyltransferase (494 aa).

A propeptide spanning residues 1 to 10 (MFNYSGLNEE) is cleaved from the precursor. C11 functions as the Nucleophile in the catalytic mechanism. The Glutamine amidotransferase type-2 domain maps to 11–231 (CGVFGIWNHP…AGEYVVINDK (221 aa)). The Mg(2+) site is built by S294, D356, and D357.

The protein in the C-terminal section; belongs to the purine/pyrimidine phosphoribosyltransferase family. It depends on Mg(2+) as a cofactor.

The enzyme catalyses 5-phospho-beta-D-ribosylamine + L-glutamate + diphosphate = 5-phospho-alpha-D-ribose 1-diphosphate + L-glutamine + H2O. It participates in purine metabolism; IMP biosynthesis via de novo pathway; N(1)-(5-phospho-D-ribosyl)glycinamide from 5-phospho-alpha-D-ribose 1-diphosphate: step 1/2. Catalyzes the formation of phosphoribosylamine from phosphoribosylpyrophosphate (PRPP) and glutamine. This chain is Amidophosphoribosyltransferase, found in Staphylococcus aureus (strain MRSA252).